The primary structure comprises 157 residues: Mediator of RNA polymerase II transcription subunit 22 (157 aa).

The protein belongs to the Mediator complex subunit 22 family. In terms of assembly, component of the Mediator complex.

It is found in the nucleus. Functionally, component of the Mediator complex, a coactivator involved in the regulated transcription of nearly all RNA polymerase II-dependent genes. Mediator functions as a bridge to convey information from gene-specific regulatory proteins to the basal RNA polymerase II transcription machinery. Mediator is recruited to promoters by direct interactions with regulatory proteins and serves as a scaffold for the assembly of a functional preinitiation complex with RNA polymerase II and the general transcription factors. The chain is Mediator of RNA polymerase II transcription subunit 22 (mdt-22) from Caenorhabditis elegans.